We begin with the raw amino-acid sequence, 267 residues long: Probable aquaporin TIP3-2 (267 aa).

Met-1 carries the post-translational modification N-acetylmethionine. At Ala-2 the chain carries N-acetylalanine; in Probable aquaporin TIP3-2, N-terminally processed. The Cytoplasmic segment spans residues 2–26 (ATSARRAYGFGRADEATHPDSIRAT). A helical membrane pass occupies residues 27 to 47 (LAEFLSTFVFVFAGEGSILAL). Residues 48-66 (DKLYWDTAAHTGTNTPGGL) are Vacuolar-facing. A helical transmembrane segment spans residues 67–87 (VLVALAHALALFAAVSAAINV). Residues 88-110 (SGGHVNPAVTFAALIGGRISVIR) lie on the Cytoplasmic side of the membrane. The NPA 1 signature appears at 93-95 (NPA). The helical transmembrane segment at 111 to 131 (AIYYWVAQLIGAILACLLLRL) threads the bilayer. Over 132-151 (ATNGLRPVGFHVASGVSELH) the chain is Vacuolar. A helical transmembrane segment spans residues 152 to 172 (GLLMEIILTFALVYVVYSTAI). Over 173–178 (DPKRGS) the chain is Cytoplasmic. The chain crosses the membrane as a helical span at residues 179-199 (IGIIAPLAIGLIVGANILVGG). The Vacuolar segment spans residues 200 to 226 (PFDGASMNPARAFGPALVGWRWSNHWI). Positions 207 to 209 (NPA) match the NPA 2 motif. A helical transmembrane segment spans residues 227 to 247 (YWVGPFIGGALAALIYEYMII). Residues 248–267 (PSVNEPPHHSTHQPLAPEDY) are Cytoplasmic-facing.

This sequence belongs to the MIP/aquaporin (TC 1.A.8) family. TIP (TC 1.A.8.10) subfamily. As to expression, predominantly expressed in developing seeds. Also expressed in rosette leaves.

Its subcellular location is the vacuole membrane. Aquaporins facilitate the transport of water and small neutral solutes across cell membranes. This is Probable aquaporin TIP3-2 (TIP3-2) from Arabidopsis thaliana (Mouse-ear cress).